A 112-amino-acid polypeptide reads, in one-letter code: MEAYEQVQKGPLKLKGVAELGVTKRKKKKKDKDKAKMLEAMGTSKKSEEEKRRCLDKRTPAQAAFEKMQEKRQMERILKKASKTHKQRVEDFNRHLDTLTEHYDIPKVSWTK.

Positions 23 to 56 are disordered; it reads TKRKKKKKDKDKAKMLEAMGTSKKSEEEKRRCLD. A compositionally biased stretch (basic and acidic residues) spans 45–56; it reads KKSEEEKRRCLD.

The protein belongs to the FAM32 family. In terms of tissue distribution, widely expressed, with highest level in pancreas and lowest in muscle.

It localises to the nucleus. May induce G2 arrest and apoptosis. May also increase cell sensitivity to apoptotic stimuli. In cell lines, may play a role in the inhibition of anchor-independent cell growth. The polypeptide is Protein FAM32A (Fam32a) (Mus musculus (Mouse)).